A 161-amino-acid chain; its full sequence is NAD(P)H-quinone oxidoreductase subunit I, chloroplastic (161 aa).

4Fe-4S ferredoxin-type domains are found at residues glycine 55–lysine 84 and leucine 95–glutamate 124. Positions 64, 67, 70, 74, 104, 107, 110, and 114 each coordinate [4Fe-4S] cluster.

This sequence belongs to the complex I 23 kDa subunit family. NDH is composed of at least 16 different subunits, 5 of which are encoded in the nucleus. It depends on [4Fe-4S] cluster as a cofactor.

Its subcellular location is the plastid. It is found in the chloroplast thylakoid membrane. The catalysed reaction is a plastoquinone + NADH + (n+1) H(+)(in) = a plastoquinol + NAD(+) + n H(+)(out). The enzyme catalyses a plastoquinone + NADPH + (n+1) H(+)(in) = a plastoquinol + NADP(+) + n H(+)(out). Its function is as follows. NDH shuttles electrons from NAD(P)H:plastoquinone, via FMN and iron-sulfur (Fe-S) centers, to quinones in the photosynthetic chain and possibly in a chloroplast respiratory chain. The immediate electron acceptor for the enzyme in this species is believed to be plastoquinone. Couples the redox reaction to proton translocation, and thus conserves the redox energy in a proton gradient. The chain is NAD(P)H-quinone oxidoreductase subunit I, chloroplastic from Lotus japonicus (Lotus corniculatus var. japonicus).